The sequence spans 138 residues: MLIPRKVKHRKQHHPRQRGIASGGTKVNFGDYGIQALEHAYVTNRQIESARIAINRHIKRGGKVWINIFPDRPLTKKPAETRMGSGKGSPEWWVVNVKPGRVLFELSYPNEQTARAALTRAIHKLPIKARIVTREEQF.

Basic residues predominate over residues 1–17 (MLIPRKVKHRKQHHPRQ). Residues 1-22 (MLIPRKVKHRKQHHPRQRGIAS) form a disordered region.

The protein belongs to the universal ribosomal protein uL16 family. Part of the 50S ribosomal subunit.

Functionally, binds 23S rRNA and is also seen to make contacts with the A and possibly P site tRNAs. This is Large ribosomal subunit protein uL16 from Mycobacterium leprae (strain Br4923).